The following is a 239-amino-acid chain: Increased recombination centers protein 22-1 (239 aa).

The first 19 residues, 1–19, serve as a signal peptide directing secretion; sequence MKLSTIFTAFAATIATVAG. Over 20–161 the chain is Lumenal; the sequence is YETTGSKQTV…AAVSFFDPRL (142 aa). A helical membrane pass occupies residues 162 to 182; sequence IFLELVLLITFAGLIYVGYEI. Residues 183 to 239 lie on the Cytoplasmic side of the membrane; sequence WGKQYFKGVASVKAKKVSAAKASSPVASGPSTTSATGYDTNWIPESHLKQKKTKKVN. The span at 201–213 shows a compositional bias: low complexity; that stretch reads AAKASSPVASGPS. A disordered region spans residues 201–222; sequence AAKASSPVASGPSTTSATGYDT.

Belongs to the IRC22 family.

The protein localises to the endoplasmic reticulum membrane. In terms of biological role, is probably involved in a pathway contributing to genomic integrity. The chain is Increased recombination centers protein 22-1 (IRC22-1) from Candida albicans (strain WO-1) (Yeast).